Consider the following 548-residue polypeptide: Chaperonin GroEL (548 aa).

Residues 30–33 (TLGP), Lys-51, 87–91 (DGTTT), Gly-415, 479–481 (NAA), and Asp-495 contribute to the ATP site.

Belongs to the chaperonin (HSP60) family. As to quaternary structure, forms a cylinder of 14 subunits composed of two heptameric rings stacked back-to-back. Interacts with the co-chaperonin GroES.

The protein resides in the cytoplasm. The catalysed reaction is ATP + H2O + a folded polypeptide = ADP + phosphate + an unfolded polypeptide.. Functionally, together with its co-chaperonin GroES, plays an essential role in assisting protein folding. The GroEL-GroES system forms a nano-cage that allows encapsulation of the non-native substrate proteins and provides a physical environment optimized to promote and accelerate protein folding. The sequence is that of Chaperonin GroEL from Klebsiella aerogenes (strain ATCC 13048 / DSM 30053 / CCUG 1429 / JCM 1235 / KCTC 2190 / NBRC 13534 / NCIMB 10102 / NCTC 10006 / CDC 819-56) (Enterobacter aerogenes).